The following is a 238-amino-acid chain: Large ribosomal subunit protein uL1 (238 aa).

Belongs to the universal ribosomal protein uL1 family. As to quaternary structure, part of the 50S ribosomal subunit.

In terms of biological role, binds directly to 23S rRNA. The L1 stalk is quite mobile in the ribosome, and is involved in E site tRNA release. Functionally, protein L1 is also a translational repressor protein, it controls the translation of the L11 operon by binding to its mRNA. In Salinispora arenicola (strain CNS-205), this protein is Large ribosomal subunit protein uL1.